Here is a 301-residue protein sequence, read N- to C-terminus: uncharacterized protein (301 aa).

Active-site charge relay system residues include S44 and Y107. Y133 acts as the Proton donor in catalysis. K162 serves as the catalytic Schiff-base intermediate with substrate.

This sequence belongs to the DapA family. In terms of assembly, homotetramer.

The protein localises to the cytoplasm. This is an uncharacterized protein from Pyrobaculum islandicum (strain DSM 4184 / JCM 9189 / GEO3).